Here is a 244-residue protein sequence, read N- to C-terminus: Chalcone--flavanone isomerase (244 aa).

Positions 57, 122, and 199 each coordinate substrate.

The protein belongs to the chalcone isomerase family.

It catalyses the reaction a chalcone = a flavanone.. It participates in secondary metabolite biosynthesis; flavonoid biosynthesis. Functionally, catalyzes the intramolecular cyclization of bicyclic chalcones into tricyclic (S)-flavanones. Responsible for the isomerization of 4,2',4',6'-tetrahydroxychalcone (also termed chalcone) into naringenin. The protein is Chalcone--flavanone isomerase (CHI) of Arabidopsis lyrata subsp. petraea (Northern rock-cress).